Reading from the N-terminus, the 354-residue chain is uncharacterized protein (354 aa).

Positions 48–285 (VETWEISKIY…DEGYEVVLKG (238 aa)) constitute an ABC transporter domain. Residue 87 to 94 (GPNGAGKT) coordinates ATP.

This sequence belongs to the ABC transporter superfamily.

This is an uncharacterized protein from Synechocystis sp. (strain ATCC 27184 / PCC 6803 / Kazusa).